Reading from the N-terminus, the 477-residue chain is MQWEPVIGLEIHAQLATKSKIFSGAATAYGAPPNTQACAVDLGLPGVLPVLNQAVVRMAVKFGLAIEAKIAKHSVFARKNYFYPDLPKGYQISQYELPIVADGHVIIELEDGVEKRIEIVRAHLEEDAGKSLHEDFHGMTGIDLNRAGTPLLEIVSGPDLRSTKEAVTYMKKIHTLVRYLGICDGNMQEGSFRCDANISIRPQGQETLGTRTELKNINSFRFVERALQYEIERQTEVLESGGQVLQETRLFDPAKNETRPMRTKEEATDYRYFPDPDLLPLVLEDSFIDEVRETLPELPDAKRKRFVMEYALSAYDASVLTASRELADYYEAVVKTADGEAKLSANWVMGDLAGALNKEGKSIADSPVSPEQLGQLIKRIADETISGKIAKTVFETMYAQGGKADEIIARQGLKQVTDTASIEKLIDEVLAANPQQVTQYQGGKDKLFGFFVGQVMKTSKGKANPQQLNELLKKKLS.

This sequence belongs to the GatB/GatE family. GatB subfamily. As to quaternary structure, heterotrimer of A, B and C subunits.

The catalysed reaction is L-glutamyl-tRNA(Gln) + L-glutamine + ATP + H2O = L-glutaminyl-tRNA(Gln) + L-glutamate + ADP + phosphate + H(+). The enzyme catalyses L-aspartyl-tRNA(Asn) + L-glutamine + ATP + H2O = L-asparaginyl-tRNA(Asn) + L-glutamate + ADP + phosphate + 2 H(+). Functionally, allows the formation of correctly charged Asn-tRNA(Asn) or Gln-tRNA(Gln) through the transamidation of misacylated Asp-tRNA(Asn) or Glu-tRNA(Gln) in organisms which lack either or both of asparaginyl-tRNA or glutaminyl-tRNA synthetases. The reaction takes place in the presence of glutamine and ATP through an activated phospho-Asp-tRNA(Asn) or phospho-Glu-tRNA(Gln). This Nitrosococcus oceani (strain ATCC 19707 / BCRC 17464 / JCM 30415 / NCIMB 11848 / C-107) protein is Aspartyl/glutamyl-tRNA(Asn/Gln) amidotransferase subunit B.